A 183-amino-acid chain; its full sequence is Adenine phosphoribosyltransferase (183 aa).

The protein belongs to the purine/pyrimidine phosphoribosyltransferase family. Homodimer.

The protein resides in the cytoplasm. The catalysed reaction is AMP + diphosphate = 5-phospho-alpha-D-ribose 1-diphosphate + adenine. It participates in purine metabolism; AMP biosynthesis via salvage pathway; AMP from adenine: step 1/1. Its function is as follows. Catalyzes a salvage reaction resulting in the formation of AMP, that is energically less costly than de novo synthesis. The polypeptide is Adenine phosphoribosyltransferase (Klebsiella pneumoniae (strain 342)).